The following is a 596-amino-acid chain: Proline--tRNA ligase (596 aa).

It belongs to the class-II aminoacyl-tRNA synthetase family. ProS type 1 subfamily. Homodimer.

Its subcellular location is the cytoplasm. It carries out the reaction tRNA(Pro) + L-proline + ATP = L-prolyl-tRNA(Pro) + AMP + diphosphate. Functionally, catalyzes the attachment of proline to tRNA(Pro) in a two-step reaction: proline is first activated by ATP to form Pro-AMP and then transferred to the acceptor end of tRNA(Pro). As ProRS can inadvertently accommodate and process non-cognate amino acids such as alanine and cysteine, to avoid such errors it has two additional distinct editing activities against alanine. One activity is designated as 'pretransfer' editing and involves the tRNA(Pro)-independent hydrolysis of activated Ala-AMP. The other activity is designated 'posttransfer' editing and involves deacylation of mischarged Ala-tRNA(Pro). The misacylated Cys-tRNA(Pro) is not edited by ProRS. The polypeptide is Proline--tRNA ligase (Prochlorococcus marinus (strain NATL1A)).